The primary structure comprises 467 residues: Asparagine--tRNA ligase (467 aa).

This sequence belongs to the class-II aminoacyl-tRNA synthetase family. As to quaternary structure, homodimer.

Its subcellular location is the cytoplasm. The catalysed reaction is tRNA(Asn) + L-asparagine + ATP = L-asparaginyl-tRNA(Asn) + AMP + diphosphate + H(+). The protein is Asparagine--tRNA ligase of Actinobacillus pleuropneumoniae serotype 3 (strain JL03).